The following is a 364-amino-acid chain: D-alanine--D-alanine ligase A (364 aa).

In terms of domain architecture, ATP-grasp spans 145–348 (KRLLRDAGLN…YTDLISRLIE (204 aa)). Position 175 to 230 (175 to 230 (ESRLGLPLFVKPANQGSSVGVSKVANEAQYQQAVALAFEFDHKVVVEQGIKGREIE)) interacts with ATP. Residues aspartate 302, glutamate 315, and asparagine 317 each coordinate Mg(2+).

It belongs to the D-alanine--D-alanine ligase family. Mg(2+) is required as a cofactor. It depends on Mn(2+) as a cofactor.

It localises to the cytoplasm. The catalysed reaction is 2 D-alanine + ATP = D-alanyl-D-alanine + ADP + phosphate + H(+). It participates in cell wall biogenesis; peptidoglycan biosynthesis. Its function is as follows. Cell wall formation. The protein is D-alanine--D-alanine ligase A (ddlA) of Salmonella typhi.